A 527-amino-acid polypeptide reads, in one-letter code: Ribosomal protein S6 kinase beta-1 (527 aa).

The disordered stretch occupies residues 1 to 54; that stretch reads MRRRRRRDGFYPAPDFRDREAEDMAGVFDIDLDQPEDAGSEDELEEGGQLNESM. Residues 28–32 carry the TOS motif motif; sequence FDIDL. Residues 30–46 are compositionally biased toward acidic residues; sequence IDLDQPEDAGSEDELEE. The Protein kinase domain maps to 91-352; that stretch reads FELLRVLGKG…AGEVQAHPFF (262 aa). Residues 97–105 and lysine 123 contribute to the ATP site; that span reads LGKGGYGKV. Residue aspartate 218 is the Proton acceptor of the active site. At threonine 252 the chain carries Phosphothreonine; by PDPK1. The AGC-kinase C-terminal domain maps to 353-423; sequence RHINWEELLA…VAPSVLESVK (71 aa). Residue serine 394 is modified to Phosphoserine. Position 412 is a phosphothreonine; by MTOR, NEK6 and NEK7 (threonine 412). Positions 424–527 are autoinhibitory domain; the sequence is EKFSFEPKIR…PEHLRMNLEL (104 aa). Serine 434 and serine 441 each carry phosphoserine. Threonine 444 is subject to Phosphothreonine. Phosphoserine is present on residues serine 447 and serine 452. Lysine 516 is subject to N6-acetyllysine.

This sequence belongs to the protein kinase superfamily. AGC Ser/Thr protein kinase family. S6 kinase subfamily. Interacts with PPP1R9A/neurabin-1. Interacts with RPTOR. Interacts with IRS1. Interacts with EIF3B and EIF3C. Interacts with TRAF4. Interacts with POLDIP3. Interacts (via N-terminus) with IER5. Post-translationally, phosphorylation at Thr-412 is regulated by mTORC1. The phosphorylation at this site is maintained by an agonist-dependent autophosphorylation mechanism. Activated by phosphorylation at Thr-252 by PDPK1. Dephosphorylation by PPP1CC at Thr-412 in mitochondrion.

It localises to the cytoplasm. The protein localises to the synapse. It is found in the synaptosome. Its subcellular location is the mitochondrion outer membrane. The protein resides in the mitochondrion. The enzyme catalyses L-seryl-[protein] + ATP = O-phospho-L-seryl-[protein] + ADP + H(+). It carries out the reaction L-threonyl-[protein] + ATP = O-phospho-L-threonyl-[protein] + ADP + H(+). With respect to regulation, inactivated by binding to URI1. Activation requires multiple phosphorylation events on serine/threonine residues. Activation appears to be first mediated by phosphorylation of multiple sites in the autoinhibitory domain, which facilitates phosphorylation at Thr-412, disrupting the autoinhibitory mechanism and allowing phosphorylation of Thr-252 by PDPK1. The active conformation of the kinase is believed to be stabilized by a mechanism involving three conserved phosphorylation sites located in the kinase domain activation loop (Thr-252) and in the AGC-kinase C-terminal domain (Ser-394 in the middle of the tail/linker region and Thr-412 within a hydrophobic motif at its end). Activated by mTORC1; isoform Alpha I and isoform Alpha II are sensitive to rapamycin, which inhibits activating phosphorylation at Thr-412. Activated by PDPK1. Serine/threonine-protein kinase that acts downstream of mTOR signaling in response to growth factors and nutrients to promote cell proliferation, cell growth and cell cycle progression. Regulates protein synthesis through phosphorylation of EIF4B, RPS6 and EEF2K, and contributes to cell survival by repressing the pro-apoptotic function of BAD. Under conditions of nutrient depletion, the inactive form associates with the EIF3 translation initiation complex. Upon mitogenic stimulation, phosphorylation by the mechanistic target of rapamycin complex 1 (mTORC1) leads to dissociation from the EIF3 complex and activation. The active form then phosphorylates and activates several substrates in the pre-initiation complex, including the EIF2B complex and the cap-binding complex component EIF4B. Also controls translation initiation by phosphorylating a negative regulator of EIF4A, PDCD4, targeting it for ubiquitination and subsequent proteolysis. Promotes initiation of the pioneer round of protein synthesis by phosphorylating POLDIP3/SKAR. In response to IGF1, activates translation elongation by phosphorylating EEF2 kinase (EEF2K), which leads to its inhibition and thus activation of EEF2. Also plays a role in feedback regulation of mTORC2 by mTORC1 by phosphorylating MAPKAP1/SIN1, MTOR and RICTOR, resulting in the inhibition of mTORC2 and AKT1 signaling. Also involved in feedback regulation of mTORC1 and mTORC2 by phosphorylating DEPTOR. Mediates cell survival by phosphorylating the pro-apoptotic protein BAD and suppressing its pro-apoptotic function. Phosphorylates mitochondrial URI1 leading to dissociation of a URI1-PPP1CC complex. The free mitochondrial PPP1CC can then dephosphorylate RPS6KB1 at Thr-412, which is proposed to be a negative feedback mechanism for the RPS6KB1 anti-apoptotic function. Mediates TNF-alpha-induced insulin resistance by phosphorylating IRS1 at multiple serine residues, resulting in accelerated degradation of IRS1. In cells lacking functional TSC1-2 complex, constitutively phosphorylates and inhibits GSK3B. May be involved in cytoskeletal rearrangement through binding to neurabin. Phosphorylates and activates the pyrimidine biosynthesis enzyme CAD, downstream of MTOR. Following activation by mTORC1, phosphorylates EPRS and thereby plays a key role in fatty acid uptake by adipocytes and also most probably in interferon-gamma-induced translation inhibition. The protein is Ribosomal protein S6 kinase beta-1 (RPS6KB1) of Bos taurus (Bovine).